Consider the following 270-residue polypeptide: 4-hydroxy-tetrahydrodipicolinate reductase (270 aa).

NAD(+) is bound by residues 9–14 and E35; that span reads GAGGRM. R36 provides a ligand contact to NADP(+). Residues 99-101 and 123-126 each bind NAD(+); these read GTT and ASNF. H156 functions as the Proton donor/acceptor in the catalytic mechanism. Residue H157 coordinates (S)-2,3,4,5-tetrahydrodipicolinate. The Proton donor role is filled by K160. (S)-2,3,4,5-tetrahydrodipicolinate is bound at residue 166-167; that stretch reads GT.

It belongs to the DapB family.

It localises to the cytoplasm. The catalysed reaction is (S)-2,3,4,5-tetrahydrodipicolinate + NAD(+) + H2O = (2S,4S)-4-hydroxy-2,3,4,5-tetrahydrodipicolinate + NADH + H(+). The enzyme catalyses (S)-2,3,4,5-tetrahydrodipicolinate + NADP(+) + H2O = (2S,4S)-4-hydroxy-2,3,4,5-tetrahydrodipicolinate + NADPH + H(+). It functions in the pathway amino-acid biosynthesis; L-lysine biosynthesis via DAP pathway; (S)-tetrahydrodipicolinate from L-aspartate: step 4/4. Its function is as follows. Catalyzes the conversion of 4-hydroxy-tetrahydrodipicolinate (HTPA) to tetrahydrodipicolinate. The polypeptide is 4-hydroxy-tetrahydrodipicolinate reductase (Pasteurella multocida (strain Pm70)).